We begin with the raw amino-acid sequence, 957 residues long: AP2-associated protein kinase 1 (957 aa).

The residue at position 1 (Met-1) is an N-acetylmethionine. Basic and acidic residues predominate over residues 1 to 11 (MKKFFDSRREQ). Positions 1 to 25 (MKKFFDSRREQGGSGLGSGSSGGGG) are disordered. Positions 12–25 (GGSGLGSGSSGGGG) are enriched in gly residues. The residue at position 14 (Ser-14) is a Phosphoserine. The Protein kinase domain occupies 46-315 (VTVDEVLAEG…QVSYFSFKLL (270 aa)). Residues 52–60 (LAEGGFAIV) and Lys-74 each bind ATP. The active-site Proton acceptor is the Asp-176. Phosphotyrosine is present on Tyr-234. Residue Ser-235 is modified to Phosphoserine. 2 disordered regions span residues 326-506 (NSPI…AVHP) and 563-629 (TAAA…AGHR). Phosphothreonine occurs at positions 354 and 389. An Omega-N-methylarginine modification is found at Arg-391. A compositionally biased stretch (pro residues) spans 436 to 448 (PQAPPTSQQPPSA). Thr-441 is subject to Phosphothreonine. 2 stretches are compositionally biased toward low complexity: residues 449–506 (PAQA…AVHP) and 563–601 (TAAAAPQPQAQPAAAASPAPAQEPAQIQAPVRQQPKVQT). Residue Thr-602 is modified to Phosphothreonine. Polar residues predominate over residues 607–617 (IQGQKLGSLTP). Ser-614 carries the post-translational modification Phosphoserine. Residue Thr-616 is modified to Phosphothreonine. Residues Ser-619, Ser-620, Ser-633, and Ser-646 each carry the phosphoserine modification. Residue Thr-649 is modified to Phosphothreonine. Residues 660–697 (SLNKSKSATTTPSGSPRASQQNVYNPSEGSTWNPFDDD) form a disordered region. Residues 668–692 (TTTPSGSPRASQQNVYNPSEGSTWN) show a composition bias toward polar residues. Residue Tyr-683 is modified to Phosphotyrosine. Phosphoserine occurs at positions 727, 842, 933, and 934. Residues 819–956 (EKADVAVESL…SLLLVDQLID (138 aa)) are clathrin-binding domain (CBD). Disordered regions lie at residues 832–855 (LEPPVPQRLPSQTESVTSNRTDSL) and 919–941 (VLITKNPQGGHSRNSSGSSESSL). Polar residues predominate over residues 840 to 855 (LPSQTESVTSNRTDSL). Positions 927–940 (GGHSRNSSGSSESS) are enriched in low complexity.

Belongs to the protein kinase superfamily. Ser/Thr protein kinase family. Interacts (via CBD domain) with clathrin. Interacts with AP-2 complex. Interacts with NUMB. Interacts with alpha-adaptin. Interacts with EPS15 isoform 2. Interacts with membrane-bound activated NOTCH1 but not with the inactive full-length form of NOTCH1. Preferentially interacts with monoubiquitinated activated NOTCH1 compared to the non-ubiquitinated form. Post-translationally, autophosphorylated. In terms of tissue distribution, detected in brain (at protein level).

It localises to the cell membrane. The protein resides in the membrane. It is found in the clathrin-coated pit. The protein localises to the presynapse. The catalysed reaction is L-seryl-[protein] + ATP = O-phospho-L-seryl-[protein] + ADP + H(+). The enzyme catalyses L-threonyl-[protein] + ATP = O-phospho-L-threonyl-[protein] + ADP + H(+). With respect to regulation, stimulated by clathrin. Regulates clathrin-mediated endocytosis by phosphorylating the AP2M1/mu2 subunit of the adaptor protein complex 2 (AP-2) which ensures high affinity binding of AP-2 to cargo membrane proteins during the initial stages of endocytosis. Preferentially, may phosphorylate substrates on threonine residues. Regulates phosphorylation of other AP-2 subunits as well as AP-2 localization and AP-2-mediated internalization of ligand complexes. Phosphorylates NUMB and regulates its cellular localization, promoting NUMB localization to endosomes. Binds to and stabilizes the activated form of NOTCH1, increases its localization in endosomes and regulates its transcriptional activity. This chain is AP2-associated protein kinase 1 (AAK1), found in Bos taurus (Bovine).